A 474-amino-acid chain; its full sequence is MLKTFDTPIHIIGGGLAGCEASWQIAQSGIPVILHEMRPQKKSDAHKTDKLAELVCSNSFRCDDSSTNAVGLLHAEMRLAKSLIMKAADANKVPAGSALAVDRDGFSKTVTSALENHSLITIKREEVQEISKDWKHVIVATGPLTSPAFAQELKAITGIKALSFFDAIAPIIHTDSIDMNICWYQSRYDKIGPEGTGKDYLNCPLNKEQYETFVEALKNAEKTEFRDFEKTPYFDGCLPIEIMAERGLETLRHGPMKPMGLTNAYNPTVKPYAVVQLRQDNKLGTLYNMVGFQTKLKYGEQVRIFRMIPGLEKAEFARLGGLHRNTYLNSPIILDQTLRLKQKKQLRFAGQITGCEGYVESAAIGLLAGRFAAAEYHHNCPCLPPQTTAFGALLNHITGGHIIDEEAERPSFQPMNINFGLFPPISPIRYSGKRLPSKEKKLAKKQAITARALNDCIQWLADKESKSSCLSKNT.

13 to 18 (GGGLAG) serves as a coordination point for FAD.

It belongs to the MnmG family. TrmFO subfamily. Requires FAD as cofactor.

It localises to the cytoplasm. The enzyme catalyses uridine(54) in tRNA + (6R)-5,10-methylene-5,6,7,8-tetrahydrofolate + NADH + H(+) = 5-methyluridine(54) in tRNA + (6S)-5,6,7,8-tetrahydrofolate + NAD(+). It catalyses the reaction uridine(54) in tRNA + (6R)-5,10-methylene-5,6,7,8-tetrahydrofolate + NADPH + H(+) = 5-methyluridine(54) in tRNA + (6S)-5,6,7,8-tetrahydrofolate + NADP(+). Catalyzes the folate-dependent formation of 5-methyl-uridine at position 54 (M-5-U54) in all tRNAs. The sequence is that of Methylenetetrahydrofolate--tRNA-(uracil-5-)-methyltransferase TrmFO from Bartonella tribocorum (strain CIP 105476 / IBS 506).